A 66-amino-acid polypeptide reads, in one-letter code: Hemicalcin (66 aa).

The signal sequence occupies residues 1 to 21; the sequence is MRASLFIVIFVVSFITISCLS. Positions 22 to 33 are excised as a propeptide; it reads TDDEEARWIEKR. Cystine bridges form between Cys36–Cys50, Cys43–Cys54, and Cys49–Cys65. Residues 55-57 are essential for stimulation of [3H]ryanodine binding to RYR1; that stretch reads KRR.

The protein belongs to the scorpion calcin family. In terms of tissue distribution, expressed by the venom gland.

The protein localises to the secreted. In terms of biological role, this toxin stabilizes ryanodine receptor 1 (RyR1) opening in a long-lasting subconductance state (20% and 38% of the full conductance state have been found). It promotes an increase in the opening probability at intermediate concentration. Furthermore, it triggers calcium release from sarcoplasmic vesicles (68 nM are enough to induce a sharp release, and 45% of the total calcium is released after toxin (100 nM) addition) probably by acting as a cell-penetrating peptide (CPP). In addition, it has been shown to dose-dependently stimulate ryanodine binding to RyR1 (EC(50)=6.9-71 nM). It also augments the bell-shaped calcium-[3H]ryanodine binding curve that is maximal at about 10 uM calcium concentration. It binds a different site as ryanodine. It acts synergistically with caffeine. In vivo, intracerebroventricular injection into mice induces neurotoxic symptoms, followed by death. This chain is Hemicalcin, found in Hemiscorpius lepturus (Scorpion).